Reading from the N-terminus, the 173-residue chain is Bifunctional protein PyrR (173 aa).

A PRPP-binding motif is present at residues 94–106 (VILIDDVLYTGRT).

This sequence belongs to the purine/pyrimidine phosphoribosyltransferase family. PyrR subfamily. Homodimer and homohexamer; in equilibrium.

The enzyme catalyses UMP + diphosphate = 5-phospho-alpha-D-ribose 1-diphosphate + uracil. Regulates transcriptional attenuation of the pyrimidine nucleotide (pyr) operon by binding in a uridine-dependent manner to specific sites on pyr mRNA. This disrupts an antiterminator hairpin in the RNA and favors formation of a downstream transcription terminator, leading to a reduced expression of downstream genes. Its function is as follows. Also displays a weak uracil phosphoribosyltransferase activity which is not physiologically significant. This chain is Bifunctional protein PyrR, found in Streptococcus gordonii (strain Challis / ATCC 35105 / BCRC 15272 / CH1 / DL1 / V288).